We begin with the raw amino-acid sequence, 354 residues long: Cellular communication network factor 6 (354 aa).

The N-terminal stretch at 1–23 (MRRLLFCTLLMTGLTQLCCRTQG) is a signal peptide. The IGFBP N-terminal domain maps to 44–117 (RTEVCRWPCR…RYETGVCAYL (74 aa)). Cystine bridges form between cysteine 48/cysteine 72, cysteine 52/cysteine 74, cysteine 54/cysteine 75, cysteine 61/cysteine 78, cysteine 86/cysteine 100, cysteine 92/cysteine 114, cysteine 209/cysteine 238, cysteine 219/cysteine 223, cysteine 247/cysteine 252, cysteine 268/cysteine 305, cysteine 285/cysteine 319, cysteine 296/cysteine 335, and cysteine 299/cysteine 337. The TSP type-1 domain maps to 208 to 253 (KCLVQATKWTPCSRTCGMGISNRVTNDNANCEMRKERRLCYIQPCS). The region spanning 268–342 (CQPTFQLPKA…TSCVCQRDCR (75 aa)) is the CTCK domain. Asparagine 308 carries an N-linked (GlcNAc...) asparagine glycan.

This sequence belongs to the CCN family.

Its subcellular location is the secreted. The protein localises to the mitochondrion. In terms of biological role, plays a role in mitochondrial electron transport and mitochondrial respiration. This Mus musculus (Mouse) protein is Cellular communication network factor 6.